We begin with the raw amino-acid sequence, 214 residues long: GTP-binding nuclear protein GSP1/Ran (214 aa).

One can recognise a Small GTPase Ran-type domain in the interval 4-168; it reads EVPTFKLVLV…LWLARKLAGN (165 aa). Residue 15-22 participates in GTP binding; sequence DGGTGKTT. Residues 34 to 42 are switch-I; it reads KKYIATIGV. GTP is bound by residues glycine 65, 119–122, and 147–149; these read NKVD and SAK. The segment at 65–81 is switch-II; that stretch reads GQEKFGGLRDGYYINAQ.

The protein belongs to the small GTPase superfamily. Ran family. In terms of assembly, found in a nuclear export complex with RanGTP, exportin and pre-miRNA.

It is found in the nucleus. Its function is as follows. GTP-binding protein involved in nucleocytoplasmic transport. Required for the import of protein into the nucleus and also for RNA export. Involved in chromatin condensation and control of cell cycle. This Eremothecium gossypii (strain ATCC 10895 / CBS 109.51 / FGSC 9923 / NRRL Y-1056) (Yeast) protein is GTP-binding nuclear protein GSP1/Ran (GSP1).